We begin with the raw amino-acid sequence, 227 residues long: Phosphatidylserine decarboxylase proenzyme (227 aa).

Catalysis depends on Ser169, which acts as the Schiff-base intermediate with substrate; via pyruvic acid. Ser169 is subject to Pyruvic acid (Ser); by autocatalysis. A disordered region spans residues 197-227 (GRIPTPESGRSSSAEATAAPSASSARRSSAS). Over residues 206 to 227 (RSSSAEATAAPSASSARRSSAS) the composition is skewed to low complexity.

Belongs to the phosphatidylserine decarboxylase family. PSD-A subfamily. Heterodimer of a large membrane-associated beta subunit and a small pyruvoyl-containing alpha subunit. Pyruvate is required as a cofactor. In terms of processing, is synthesized initially as an inactive proenzyme. Formation of the active enzyme involves a self-maturation process in which the active site pyruvoyl group is generated from an internal serine residue via an autocatalytic post-translational modification. Two non-identical subunits are generated from the proenzyme in this reaction, and the pyruvate is formed at the N-terminus of the alpha chain, which is derived from the carboxyl end of the proenzyme. The post-translation cleavage follows an unusual pathway, termed non-hydrolytic serinolysis, in which the side chain hydroxyl group of the serine supplies its oxygen atom to form the C-terminus of the beta chain, while the remainder of the serine residue undergoes an oxidative deamination to produce ammonia and the pyruvoyl prosthetic group on the alpha chain.

Its subcellular location is the cell membrane. It carries out the reaction a 1,2-diacyl-sn-glycero-3-phospho-L-serine + H(+) = a 1,2-diacyl-sn-glycero-3-phosphoethanolamine + CO2. It functions in the pathway phospholipid metabolism; phosphatidylethanolamine biosynthesis; phosphatidylethanolamine from CDP-diacylglycerol: step 2/2. Its function is as follows. Catalyzes the formation of phosphatidylethanolamine (PtdEtn) from phosphatidylserine (PtdSer). The chain is Phosphatidylserine decarboxylase proenzyme from Salinibacter ruber (strain DSM 13855 / M31).